We begin with the raw amino-acid sequence, 130 residues long: Holo-[acyl-carrier-protein] synthase (130 aa).

Mg(2+)-binding residues include Asp-8 and Glu-62.

It belongs to the P-Pant transferase superfamily. AcpS family. Mg(2+) is required as a cofactor.

The protein resides in the cytoplasm. It carries out the reaction apo-[ACP] + CoA = holo-[ACP] + adenosine 3',5'-bisphosphate + H(+). Its function is as follows. Transfers the 4'-phosphopantetheine moiety from coenzyme A to a Ser of acyl-carrier-protein. The protein is Holo-[acyl-carrier-protein] synthase of Polynucleobacter asymbioticus (strain DSM 18221 / CIP 109841 / QLW-P1DMWA-1) (Polynucleobacter necessarius subsp. asymbioticus).